Here is a 500-residue protein sequence, read N- to C-terminus: MDFETLLSYEWGVMMPEFIILGVAVALSLIDLFMPENRNRQLLGLFAFVGIAVSFVSLLSLWTSDVTSILGDTFRLDSFAKSFKALLLIGSALVLLLSIHYEPKERIAYRGEFYYLFLTALLGAMMMASSGDLITLFVGLELLSISSYILVAIRKKHTLANEAALKYVITGSIATAITLFGMSYIFGFTGSTNIKEIAVQLASTSDENHQYVLSLAFLLTFVGLSFKLASAPFHMWAPDVYQGATTPVVSFLSVVSKTAGFVIVLRVIVSVFAQTPAGSSASMLMTFAPYIAFLSGATMIIGNTIALRQRNVKRMLAYSSVAHAGYVLVAFASLSMFMFEAIWFYLLAYVFMTIGAFAILQVVSQHPDDEDISIFAGLYRRSPLMAIAMTIFLLSLAGIPGTAGFIGKMNIFLGAFVVEPAHYVLASIMVITTIISYVYYFGIFVQMFFRPVEHTHRLEWPPGVIAVVVICVIGTVLLGVFPNIAYDFLAPFQHFSDFLQ.

14 helical membrane-spanning segments follow: residues 13–33 (VMMP…IDLF), 42–62 (LLGL…LSLW), 79–99 (FAKS…LLSI), 111–131 (GEFY…ASSG), 133–153 (LITL…LVAI), 168–188 (VITG…IFGF), 211–231 (YVLS…LASA), 245–265 (TTPV…VIVL), 281–301 (ASML…TMII), 321–341 (VAHA…MFEA), 342–362 (IWFY…ILQV), 386–406 (AIAM…AGFI), 424–444 (VLAS…FGIF), and 461–481 (PPGV…LGVF).

The protein belongs to the complex I subunit 2 family. In terms of assembly, NDH-1 is composed of 14 different subunits. Subunits NuoA, H, J, K, L, M, N constitute the membrane sector of the complex.

It localises to the cell membrane. The enzyme catalyses a quinone + NADH + 5 H(+)(in) = a quinol + NAD(+) + 4 H(+)(out). NDH-1 shuttles electrons from NADH, via FMN and iron-sulfur (Fe-S) centers, to quinones in the respiratory chain. The immediate electron acceptor for the enzyme in this species is believed to be a menaquinone. Couples the redox reaction to proton translocation (for every two electrons transferred, four hydrogen ions are translocated across the cytoplasmic membrane), and thus conserves the redox energy in a proton gradient. The sequence is that of NADH-quinone oxidoreductase subunit N from Anoxybacillus flavithermus (strain DSM 21510 / WK1).